A 120-amino-acid polypeptide reads, in one-letter code: Large ribosomal subunit protein uL18 (120 aa).

This sequence belongs to the universal ribosomal protein uL18 family. In terms of assembly, part of the 50S ribosomal subunit; part of the 5S rRNA/L5/L18/L25 subcomplex. Contacts the 5S and 23S rRNAs.

Functionally, this is one of the proteins that bind and probably mediate the attachment of the 5S RNA into the large ribosomal subunit, where it forms part of the central protuberance. This Staphylococcus saprophyticus subsp. saprophyticus (strain ATCC 15305 / DSM 20229 / NCIMB 8711 / NCTC 7292 / S-41) protein is Large ribosomal subunit protein uL18.